Reading from the N-terminus, the 188-residue chain is Protein GrpE (188 aa).

Residues 1-24 (MSDENKPGEAAELDAGVAPEAQPE) are disordered.

This sequence belongs to the GrpE family. In terms of assembly, homodimer.

Its subcellular location is the cytoplasm. Its function is as follows. Participates actively in the response to hyperosmotic and heat shock by preventing the aggregation of stress-denatured proteins, in association with DnaK and GrpE. It is the nucleotide exchange factor for DnaK and may function as a thermosensor. Unfolded proteins bind initially to DnaJ; upon interaction with the DnaJ-bound protein, DnaK hydrolyzes its bound ATP, resulting in the formation of a stable complex. GrpE releases ADP from DnaK; ATP binding to DnaK triggers the release of the substrate protein, thus completing the reaction cycle. Several rounds of ATP-dependent interactions between DnaJ, DnaK and GrpE are required for fully efficient folding. In Hyphomonas neptunium (strain ATCC 15444), this protein is Protein GrpE.